The following is a 417-amino-acid chain: UDP-N-acetylglucosamine 1-carboxyvinyltransferase (417 aa).

22–23 serves as a coordination point for phosphoenolpyruvate; it reads KN. Position 92 (R92) interacts with UDP-N-acetyl-alpha-D-glucosamine. The active-site Proton donor is C116. At C116 the chain carries 2-(S-cysteinyl)pyruvic acid O-phosphothioketal. UDP-N-acetyl-alpha-D-glucosamine-binding residues include D304 and I326.

This sequence belongs to the EPSP synthase family. MurA subfamily.

It localises to the cytoplasm. The enzyme catalyses phosphoenolpyruvate + UDP-N-acetyl-alpha-D-glucosamine = UDP-N-acetyl-3-O-(1-carboxyvinyl)-alpha-D-glucosamine + phosphate. The protein operates within cell wall biogenesis; peptidoglycan biosynthesis. In terms of biological role, cell wall formation. Adds enolpyruvyl to UDP-N-acetylglucosamine. The sequence is that of UDP-N-acetylglucosamine 1-carboxyvinyltransferase from Desulforapulum autotrophicum (strain ATCC 43914 / DSM 3382 / VKM B-1955 / HRM2) (Desulfobacterium autotrophicum).